Reading from the N-terminus, the 593-residue chain is NADH-quinone oxidoreductase subunit C/D (593 aa).

The NADH dehydrogenase I subunit C stretch occupies residues 1–184 (MTADNAIFIP…DPYSLTLAKQ (184 aa)). An NADH dehydrogenase I subunit D region spans residues 208–593 (DYMFLNLGPN…IDFVMADVDR (386 aa)).

The protein in the N-terminal section; belongs to the complex I 30 kDa subunit family. In the C-terminal section; belongs to the complex I 49 kDa subunit family. NDH-1 is composed of 13 different subunits. Subunits NuoB, CD, E, F, and G constitute the peripheral sector of the complex.

It localises to the cell inner membrane. It carries out the reaction a quinone + NADH + 5 H(+)(in) = a quinol + NAD(+) + 4 H(+)(out). Its function is as follows. NDH-1 shuttles electrons from NADH, via FMN and iron-sulfur (Fe-S) centers, to quinones in the respiratory chain. The immediate electron acceptor for the enzyme in this species is believed to be ubiquinone. Couples the redox reaction to proton translocation (for every two electrons transferred, four hydrogen ions are translocated across the cytoplasmic membrane), and thus conserves the redox energy in a proton gradient. This Pseudomonas putida (strain GB-1) protein is NADH-quinone oxidoreductase subunit C/D.